A 242-amino-acid chain; its full sequence is Pyr4-family terpene cyclase mfmH (242 aa).

4 helical membrane passes run 25 to 45 (VQDG…ILYI), 55 to 75 (GMPL…GAAI), 80 to 100 (AQVV…YTTW), and 116 to 136 (NLGW…WAFL). Asparagine 170 carries an N-linked (GlcNAc...) asparagine glycan. The next 2 membrane-spanning stretches (helical) occupy residues 175–195 (SWGI…IFVW) and 211–231 (VTIF…FVYA).

This sequence belongs to the paxB family.

The protein localises to the membrane. Its pathway is secondary metabolite biosynthesis; terpenoid biosynthesis. In terms of biological role, terpene cyclase; part of the gene cluster that mediates the biosynthesis of the phthalide-terpenoid hybrid 11'-O-desmethylfendlerol. Within the pathway, mfmH catalyzes the last step and cyclizes the prenyl unit of 5-O-farnesylcyclopolic acid into a drimane-like structure to yield 11'-O-desmethylfendlerol. The biosynthesis of 11'-O-desmethylfendlerol begins with the NR-PKS mfmB that forms 3,5-dimethylorsellinic acid (DMOA), which is then transformed into the phthalide 5,7-dihydroxy-4-(hydroxymethyl)-6-methylphthalide by the cytochrome P450 monooxygenase mfmA and the hydrolase mfmC. Subsequently, the methyltransferase mfmE catalyzes 7-O-methylation to yield 5-hydroxy-4-(hydroxymethyl)-7-methoxy-6-methylphthalide, which undergoes C-3 hydroxylation by the cytochrome P450 monooxygenase mfmF. The resultant cyclopolic acid (2,5-dihydroxy-4-(hydroxymethyl)-7-methoxy-6-methylphthalide) is then farnesylated by the DMATS-type prenyltransferase mfmD to afford 5-O-farnesylcyclopolic acid. Finally, the Pyr4-family terpene cyclase mfmH cyclizes the farnesyl moiety of 5-O-farnesylcyclopolic acid into a drimane-like structure, thus completing the biosynthesis of 11'-O-desmethylfendlerol. The polypeptide is Pyr4-family terpene cyclase mfmH (Annulohypoxylon moriforme (Filamentous fungus)).